Reading from the N-terminus, the 307-residue chain is Elongation factor Ts (307 aa).

The tract at residues 79 to 82 (TDFV) is involved in Mg(2+) ion dislocation from EF-Tu.

It belongs to the EF-Ts family.

Its subcellular location is the cytoplasm. Functionally, associates with the EF-Tu.GDP complex and induces the exchange of GDP to GTP. It remains bound to the aminoacyl-tRNA.EF-Tu.GTP complex up to the GTP hydrolysis stage on the ribosome. The polypeptide is Elongation factor Ts (Bartonella tribocorum (strain CIP 105476 / IBS 506)).